Consider the following 87-residue polypeptide: Phosphoribosyl-ATP pyrophosphatase (87 aa).

It belongs to the PRA-PH family.

The protein resides in the cytoplasm. It catalyses the reaction 1-(5-phospho-beta-D-ribosyl)-ATP + H2O = 1-(5-phospho-beta-D-ribosyl)-5'-AMP + diphosphate + H(+). Its pathway is amino-acid biosynthesis; L-histidine biosynthesis; L-histidine from 5-phospho-alpha-D-ribose 1-diphosphate: step 2/9. The chain is Phosphoribosyl-ATP pyrophosphatase from Kocuria rhizophila (strain ATCC 9341 / DSM 348 / NBRC 103217 / DC2201).